We begin with the raw amino-acid sequence, 88 residues long: Small ribosomal subunit protein bS20 (88 aa).

Residues 1–28 (MANTVQARKRARQAVKQNEHNSSLRSKL) are disordered.

It belongs to the bacterial ribosomal protein bS20 family.

Functionally, binds directly to 16S ribosomal RNA. The chain is Small ribosomal subunit protein bS20 from Polynucleobacter necessarius subsp. necessarius (strain STIR1).